The following is a 136-amino-acid chain: Nucleoside diphosphate kinase (136 aa).

Residues K10, F58, R86, T92, R104, and N114 each contribute to the ATP site. The active-site Pros-phosphohistidine intermediate is the H117.

Belongs to the NDK family. As to quaternary structure, homotetramer. Mg(2+) serves as cofactor.

The protein resides in the cytoplasm. It carries out the reaction a 2'-deoxyribonucleoside 5'-diphosphate + ATP = a 2'-deoxyribonucleoside 5'-triphosphate + ADP. It catalyses the reaction a ribonucleoside 5'-diphosphate + ATP = a ribonucleoside 5'-triphosphate + ADP. Functionally, major role in the synthesis of nucleoside triphosphates other than ATP. The ATP gamma phosphate is transferred to the NDP beta phosphate via a ping-pong mechanism, using a phosphorylated active-site intermediate. This chain is Nucleoside diphosphate kinase, found in Saccharopolyspora erythraea (strain ATCC 11635 / DSM 40517 / JCM 4748 / NBRC 13426 / NCIMB 8594 / NRRL 2338).